Here is a 288-residue protein sequence, read N- to C-terminus: Beta-lactamase CARB-3 (288 aa).

A signal peptide spans 1 to 17 (MKFLLAFSLLIPSVVFA). Catalysis depends on S65, which acts as the Acyl-ester intermediate. A disulfide bridge links C72 with C118. Residue 229 to 231 (RSG) coordinates substrate.

The protein belongs to the class-A beta-lactamase family.

It catalyses the reaction a beta-lactam + H2O = a substituted beta-amino acid. Its function is as follows. Hydrolyzes both carbenicillin and oxacillin. The chain is Beta-lactamase CARB-3 (carB3) from Pseudomonas aeruginosa.